Here is a 564-residue protein sequence, read N- to C-terminus: Arginine--tRNA ligase (564 aa).

Residues 124-134 carry the 'HIGH' region motif; that stretch reads PNIAKDMHVGH.

It belongs to the class-I aminoacyl-tRNA synthetase family. Monomer.

It is found in the cytoplasm. The catalysed reaction is tRNA(Arg) + L-arginine + ATP = L-arginyl-tRNA(Arg) + AMP + diphosphate. This Chlamydia caviae (strain ATCC VR-813 / DSM 19441 / 03DC25 / GPIC) (Chlamydophila caviae) protein is Arginine--tRNA ligase.